The sequence spans 49 residues: Osteocalcin (49 aa).

The Gla domain occupies 1 to 47; sequence YLDHGLGAPAPYPDPLEPKREVCELNPDCDELADHIGFQEAYRRFYG. Residue Pro9 is modified to Hydroxyproline. Residues Glu17, Glu21, Glu24, and Asp30 each contribute to the Ca(2+) site. 3 positions are modified to 4-carboxyglutamate: Glu17, Glu21, and Glu24. The cysteines at positions 23 and 29 are disulfide-linked.

It belongs to the osteocalcin/matrix Gla protein family. Post-translationally, gamma-carboxyglutamic acid residues are formed by vitamin K dependent carboxylation. These residues are essential for the binding of calcium.

The protein localises to the secreted. In terms of biological role, the carboxylated form is one of the main organic components of the bone matrix, which constitutes 1-2% of the total bone protein: it acts as a negative regulator of bone formation and is required to limit bone formation without impairing bone resorption or mineralization. The carboxylated form binds strongly to apatite and calcium. The uncarboxylated form acts as a hormone secreted by osteoblasts, which regulates different cellular processes, such as energy metabolism, male fertility and brain development. Regulates of energy metabolism by acting as a hormone favoring pancreatic beta-cell proliferation, insulin secretion and sensitivity and energy expenditure. Uncarboxylated osteocalcin hormone also promotes testosterone production in the testes: acts as a ligand for G protein-coupled receptor GPRC6A at the surface of Leydig cells, initiating a signaling response that promotes the expression of enzymes required for testosterone synthesis in a CREB-dependent manner. Also acts as a regulator of brain development: osteocalcin hormone crosses the blood-brain barrier and acts as a ligand for GPR158 on neurons, initiating a signaling response that prevents neuronal apoptosis in the hippocampus, favors the synthesis of all monoamine neurotransmitters and inhibits that of gamma-aminobutyric acid (GABA). Osteocalcin also crosses the placenta during pregnancy and maternal osteocalcin is required for fetal brain development. The chain is Osteocalcin (BGLAP) from Bison priscus (Steppe wisent).